A 299-amino-acid chain; its full sequence is Regucalcin (299 aa).

Residue glutamate 18 coordinates a divalent metal cation. Substrate is bound by residues arginine 101, asparagine 103, and glutamate 121. A divalent metal cation-binding residues include asparagine 154 and aspartate 204. Aspartate 204 (proton donor/acceptor) is an active-site residue.

This sequence belongs to the SMP-30/CGR1 family. The cofactor is Zn(2+). It depends on Mn(2+) as a cofactor. Ca(2+) serves as cofactor. Mg(2+) is required as a cofactor. In terms of tissue distribution, expressed in the liver, and in the pronephros from the late tadpole stage.

It is found in the cytoplasm. The enzyme catalyses D-glucono-1,5-lactone + H2O = D-gluconate + H(+). It functions in the pathway cofactor biosynthesis; L-ascorbate biosynthesis via UDP-alpha-D-glucuronate pathway; L-ascorbate from UDP-alpha-D-glucuronate: step 3/4. Functionally, gluconolactonase with low activity towards other sugar lactones, including gulonolactone and galactonolactone. Catalyzes a key step in ascorbic acid (vitamin C) biosynthesis. Can also hydrolyze diisopropyl phosphorofluoridate and phenylacetate (in vitro). Calcium-binding protein. Modulates Ca(2+) signaling, and Ca(2+)-dependent cellular processes and enzyme activities. The polypeptide is Regucalcin (Xenopus laevis (African clawed frog)).